The following is a 148-amino-acid chain: MSSFNDYFEIQNVENLLPTLKLCKQYFFKNKQDSIVNNNNYNNNNKNNNNNNNNNNNNNNNNNNNNNNNYINSCNSNNNNNNNNNNTKNNNINSRTDKNNNGDNKFNFINEIVNNNISTYTPYNILNSCHGSSLFEIKPQPITCKDIN.

Residues 37–94 (NNNNYNNNNKNNNNNNNNNNNNNNNNNNNNNNNYINSCNSNNNNNNNNNNTKNNNINS) are compositionally biased toward low complexity. Residues 37–99 (NNNNYNNNNK…NNINSRTDKN (63 aa)) are disordered.

This is an uncharacterized protein from Dictyostelium discoideum (Social amoeba).